The following is a 214-amino-acid chain: Ceramide-1-phosphate transfer protein (214 aa).

An N-acylsphingoid base 1-phosphate-binding residues include D56, K60, R106, R110, and H150.

This sequence belongs to the GLTP family.

It localises to the cytoplasm. It is found in the cytosol. The protein localises to the golgi apparatus. Its subcellular location is the trans-Golgi network membrane. The protein resides in the cell membrane. It localises to the endosome membrane. It is found in the nucleus outer membrane. It catalyses the reaction N-(hexadecanoyl)-sphing-4-enine-1-phosphate(in) = N-(hexadecanoyl)-sphing-4-enine-1-phosphate(out). It carries out the reaction N-(9Z-octadecenoyl)-sphing-4-enine-1-phosphate(in) = N-(9Z-octadecenoyl)-sphing-4-enine-1-phosphate(out). In terms of biological role, mediates the intracellular transfer of ceramide-1-phosphate (C1P) between organelle membranes and the cell membrane. Required for normal structure of the Golgi stacks. Can bind phosphoceramides with a variety of aliphatic chains, but has a preference for lipids with saturated C16:0 or monounsaturated C18:1 aliphatic chains, and is inefficient with phosphoceramides containing lignoceryl (C24:0). Plays a role in the regulation of the cellular levels of ceramide-1-phosphate, and thereby contributes to the regulation of phospholipase PLA2G4A activity and the release of arachidonic acid. Has no activity with galactosylceramide, lactosylceramide, sphingomyelin, phosphatidylcholine, phosphatidic acid and ceramide. C1P transfer is stimulated by phosphatidylserine in C1P source vesicles. Regulates autophagy, inflammasome mediated IL1B and IL18 processing, and pyroptosis, but not apoptosis. In Bos taurus (Bovine), this protein is Ceramide-1-phosphate transfer protein (CPTP).